The following is a 361-amino-acid chain: Mitochondrial import receptor subunit TOM40 homolog (361 aa).

Residues 1-10 are compositionally biased toward low complexity; the sequence is MGNVLAASSP. Residues 1–71 form a disordered region; that stretch reads MGNVLAASSP…TASASGAAED (71 aa). Over residues 11–36 the composition is skewed to pro residues; that stretch reads PAGPPPPPAPALVGLPPPPPSPPGFT. Composition is skewed to low complexity over residues 37-52 and 59-71; these read LPPL…STSR and GAAT…AAED.

The protein belongs to the Tom40 family. Forms part of the preprotein translocase complex of the outer mitochondrial membrane (TOM complex) which consists of at least 7 different proteins (TOMM5, TOMM6, TOMM7, TOMM20, TOMM22, TOMM40 and TOMM70). Interacts with mitochondrial targeting sequences. Interacts with TIMM29; linking the TIM22 complex to the TOM complex. Forms a complex with BCAP31 (via C-terminus) which mediates the translocation of components of the mitochondrial membrane respiratory chain NADH dehydrogenase (Complex I) from the cytosol to the mitochondria. Interacts (via N-terminus) with CYP1A1 (via mitochondrial targeting signal); this interaction is required for CYP1A1 translocation across the mitochondrial outer membrane.

It localises to the mitochondrion outer membrane. Its function is as follows. Channel-forming protein essential for import of protein precursors into mitochondria. Plays a role in the assembly of the mitochondrial membrane respiratory chain NADH dehydrogenase (Complex I) by forming a complex with BCAP31 and mediating the translocation of Complex I components from the cytosol to the mitochondria. The polypeptide is Mitochondrial import receptor subunit TOM40 homolog (TOMM40) (Homo sapiens (Human)).